Here is a 777-residue protein sequence, read N- to C-terminus: Santalene and bergamotene synthase, chloroplastic (777 aa).

Residues 1 to 36 constitute a chloroplast transit peptide; it reads MIVGYRSTIITLSHPKLGNGKTISSNAIFQRSCRVR. Positions 530 and 534 each coordinate Mg(2+). Residues 530–534 carry the DDXXD motif motif; it reads DDQFD.

It belongs to the terpene synthase family. Tpse subfamily. Requires Mg(2+) as cofactor. The cofactor is Mn(2+).

Its subcellular location is the plastid. The protein localises to the chloroplast. It carries out the reaction (2Z,6Z)-farnesyl diphosphate = (+)-alpha-santalene + diphosphate. The catalysed reaction is (2Z,6Z)-farnesyl diphosphate = (+)-endo-beta-bergamotene + diphosphate. The enzyme catalyses (2Z,6Z)-farnesyl diphosphate = (1S,5S,6S)-alpha-bergamotene + diphosphate. Functionally, (2Z,6Z)-farnesyl diphosphate cyclizing enzyme. Produces (+)-alpha-santalene, (+)-endo-beta-bergamotene, (-)-endo-alpha-bergamotene, and at lower amounts, (-)exo-alpha-bergamotene and (+)-epi-beta-santalene. Not able to use geranyl diphosphate, E,E-farnesyl diphosphate or E,E,E-geranylgeranyl diphosphate as substrates, but able to use Neryl diphosphate to make the monoterpene terpineol. This chain is Santalene and bergamotene synthase, chloroplastic (SBS), found in Solanum habrochaites (Wild tomato).